A 290-amino-acid chain; its full sequence is D-tagatose-1,6-bisphosphate aldolase subunit KbaY (290 aa).

The Proton donor role is filled by D82. Positions 83 and 180 each coordinate Zn(2+). Dihydroxyacetone phosphate is bound at residue G181. Residue H208 participates in Zn(2+) binding. Dihydroxyacetone phosphate is bound by residues 209–211 and 230–233; these read GAS and NVAT.

The protein belongs to the class II fructose-bisphosphate aldolase family. TagBP aldolase KbaY subfamily. As to quaternary structure, homotetramer. Forms a complex with KbaZ. Zn(2+) is required as a cofactor.

The catalysed reaction is D-tagatofuranose 1,6-bisphosphate = D-glyceraldehyde 3-phosphate + dihydroxyacetone phosphate. It participates in carbohydrate metabolism; D-tagatose 6-phosphate degradation; D-glyceraldehyde 3-phosphate and glycerone phosphate from D-tagatose 6-phosphate: step 2/2. Its function is as follows. Catalytic subunit of the tagatose-1,6-bisphosphate aldolase KbaYZ, which catalyzes the reversible aldol condensation of dihydroxyacetone phosphate (DHAP or glycerone-phosphate) with glyceraldehyde 3-phosphate (G3P) to produce tagatose 1,6-bisphosphate (TBP). Requires KbaZ subunit for full activity and stability. This is D-tagatose-1,6-bisphosphate aldolase subunit KbaY from Citrobacter koseri (strain ATCC BAA-895 / CDC 4225-83 / SGSC4696).